The following is a 2641-amino-acid chain: Prosolanapyrone synthase (2641 aa).

In terms of domain architecture, Ketosynthase family 3 (KS3) spans 14–440 (PEPIAIVGMG…GANGHCIIDD (427 aa)). Residues cysteine 187, histidine 323, and histidine 363 each act as for beta-ketoacyl synthase activity in the active site. A disordered region spans residues 456-515 (SIGHINGHTNGHTNGHTNGHTNGHTNGHTNGHTNGAHASDGHNGHHQNGMNGNSASHMSE). Residues 461-490 (NGHTNGHTNGHTNGHTNGHTNGHTNGHTNG) show a composition bias toward low complexity. Residues 619-920 (FVFTGQGAQW…KGPVGQISRS (302 aa)) form a malonyl-CoA:ACP transacylase (MAT) region. The interval 1011–1149 (HDLLGSKLPG…GRVRVIAGTS (139 aa)) is N-terminal hotdog fold. Positions 1011–1309 (HDLLGSKLPG…GNLRCVTYTE (299 aa)) are dehydratase (DH) domain. One can recognise a PKS/mFAS DH domain in the interval 1011–1313 (HDLLGSKLPG…CVTYTEVLPS (303 aa)). The active-site Proton acceptor; for dehydratase activity is the histidine 1043. The tract at residues 1161–1313 (ARTLDTKAWY…CVTYTEVLPS (153 aa)) is C-terminal hotdog fold. Aspartate 1227 functions as the Proton donor; for dehydratase activity in the catalytic mechanism. The methyltransferase (MT) domain stretch occupies residues 1477-1665 (TGAYPQLVRF…GAELVLDDYP (189 aa)). Positions 1894–2206 (GLLTSLYFKP…KGTHVGKLVV (313 aa)) are enoyl reductase (ER) domain. The ketoreductase (KR) domain stretch occupies residues 2231-2408 (NYLITGGLGG…STVSFGLIRD (178 aa)). The region spanning 2561–2639 (RTVALVTDAI…ILANKIVDGA (79 aa)) is the Carrier domain. An O-(pantetheine 4'-phosphoryl)serine modification is found at serine 2598.

The protein operates within phytotoxin biosynthesis. In terms of biological role, prosolanapyrone synthase; part of the gene cluster that mediates the biosynthesis of the phytotoxin solanapyrone, a causal agent of early blight disease of potato and tomato. The prosolanapyrone synthase sol1 is a polyketide synthase that produces the octaketide desmethylprosolanapyrone I via sequential condensations of 7 malonyl-CoA units with one acetyl-CoA unit, and one methylation step. The octaketide backbone is further methylated by the sol2 O-methyltransferase to yield prosolanapyrone I. Prosolanapyrone I is hydroxylated to prosolanapyrone II by the cytochrome P450 monooxygenase sol6. The solanapyrone synthase sol5 then catalyzes the oxidation of prosolanapyrone II and the subsequent Diels Alder cycloisomerization of the product prosolanapyrone III to solanapyrones A and D. Solanapyrones A and D are then converted into solanapyrones B and E, respectively, by the sol3 dehydrogenase. This Alternaria solani protein is Prosolanapyrone synthase (sol1).